The primary structure comprises 156 residues: Jun dimerization protein 2 (156 aa).

Residues 56–95 (KRPFDAIKSEDDDDDERKKRRREKNKVAAARCRNRKKERT) are disordered. Positions 70-133 (DERKKRRREK…QQLIVMLNLH (64 aa)) constitute a bZIP domain. The basic motif stretch occupies residues 72 to 94 (RKKRRREKNKVAAARCRNRKKER). The tract at residues 98 to 126 (LQKESERLEMLNSDLKSQIEELKSERQQL) is leucine-zipper.

It belongs to the bZIP family. ATF subfamily.

It localises to the nucleus. In terms of biological role, component of the AP-1 transcription factor that represses transactivation mediated by the Jun family of proteins. The protein is Jun dimerization protein 2 (jdp2) of Danio rerio (Zebrafish).